Consider the following 95-residue polypeptide: Small ribosomal subunit protein bS6 (95 aa).

This sequence belongs to the bacterial ribosomal protein bS6 family.

Binds together with bS18 to 16S ribosomal RNA. The polypeptide is Small ribosomal subunit protein bS6 (Bacillus cytotoxicus (strain DSM 22905 / CIP 110041 / 391-98 / NVH 391-98)).